Consider the following 904-residue polypeptide: Essential for maintenance of the cell wall protein 1 (904 aa).

TPR repeat units lie at residues 510–544, 563–596, 603–636, 637–670, 671–704, and 706–739; these read WQLDATLAEKYMSLGILKSAVEIYERLGMACETAL, INENDSDARAYSILGDIKQDPSLWEKSWEIGKYV, AKYYFNPPPKSGAQPNYSATLKHLNDSLRQYPLS, FETWYFYGCVGLQCGKMQIAAEAFTRCVSLDPYH, ALSWSNLSAAYTKMDKLKEAYSCLKRAISCDAQK, and WKIWENYMLVAVKLNEWEDVLTACKQLVSIRRDK.

Belongs to the TTC27 family.

It localises to the cytoplasm. Its subcellular location is the nucleus. Required for the maintenance of the cell wall integrity. In Saccharomyces cerevisiae (strain ATCC 204508 / S288c) (Baker's yeast), this protein is Essential for maintenance of the cell wall protein 1 (EMW1).